Consider the following 130-residue polypeptide: MIRPIKKITLRKTKKKSPKGVIHIQASFNNTIVTITDLRGQVISWSSSGACGFKGAKKSTAYAAQIATENAIKQWTDQNTKQAEVMMSGPGPGRETALRAIRNSRVILSFIRDVTPIPHNGCRPPKKRRV.

This sequence belongs to the universal ribosomal protein uS11 family. Part of the 30S ribosomal subunit.

Its subcellular location is the plastid. The protein localises to the chloroplast. The chain is Small ribosomal subunit protein uS11c from Chara vulgaris (Common stonewort).